A 2768-amino-acid chain; its full sequence is Thyroglobulin (2768 aa).

A signal peptide spans 1-20; it reads MMTLVLWVSTLLSSVCLVAA. Y25 bears the Iodotyrosine; alternate mark. Residue Y25 is modified to Sulfotyrosine; alternate. Thyroxine; alternate is present on Y25. Position 25 is a triiodothyronine; alternate (Y25). Thyroglobulin type-1 domains follow at residues 32-93, 94-161, 162-298, and 299-359; these read LRPC…PTAC, LSFC…PTRC, PRSC…RFRC, and PTKC…PLFC. Disulfide bonds link C35–C53, C64–C71, C73–C93, C97–C121, C132–C139, C141–C161, C165–C184, and C195–C236. Y109 carries the iodotyrosine modification. An N-linked (GlcNAc...) asparagine glycan is attached at N111. Y150 bears the Iodotyrosine; alternate mark. Position 150 is a diiodotyrosine; alternate (Y150). N199 carries N-linked (GlcNAc...) asparagine glycosylation. Y235 and Y259 each carry iodotyrosine. 8 disulfides stabilise this stretch: C302/C320, C331/C337, C339/C365, C408/C608, C631/C636, C638/C658, C662/C687, and C698/C703. Residues N484, N496, and N545 are each glycosylated (N-linked (GlcNAc...) asparagine). Thyroglobulin type-1 domains follow at residues 605-658, 659-726, 727-922, 923-1074, 1075-1146, and 1147-1211; these read AQAC…HPRC, PTKC…PKLC, PSVC…IPAC, PGPC…MPQC, PTSC…SAQC, and PGLC…QPAC. Y704 bears the Iodotyrosine; alternate mark. Y704 is subject to Thyroxine; alternate. At Y704 the chain carries Triiodothyronine; alternate. Residue Y704 is modified to Diiodotyrosine; alternate. Cystine bridges form between C705–C726, C730–C763, C774–C899, C901–C922, C926–C1032, C1043–C1050, C1052–C1074, C1078–C1109, C1127–C1146, C1150–C1170, C1182–C1189, C1191–C1211, C1216–C1265, C1232–C1246, C1306–C1356, and C1331–C1347. N748 carries N-linked (GlcNAc...) asparagine glycosylation. At Y785 the chain carries Iodotyrosine. N817 carries an N-linked (GlcNAc...) asparagine glycan. Y867 carries the post-translational modification Iodotyrosine; alternate. Y867 carries the diiodotyrosine; alternate modification. Position 884 is a diiodotyrosine (Y884). N948 is a glycosylation site (N-linked (GlcNAc...) asparagine). Y993 carries the iodotyrosine; alternate modification. Y993 bears the Diiodotyrosine; alternate mark. N1017 carries an N-linked (GlcNAc...) asparagine glycan. N-linked (GlcNAc...) asparagine glycosylation is present at N1141. An Iodotyrosine modification is found at Y1310. Y1310 carries the thyroxine modification. 2 N-linked (GlcNAc...) asparagine glycosylation sites follow: N1349 and N1365. Intrachain disulfides connect C1441–C1458, C1461–C1472, C1475–C1489, C1492–C1509, C1513–C1522, C1542–C1564, C1602–C1626, C1606–C1612, and C1638–C1661. Type II repeat units follow at residues 1455–1468, 1469–1485, and 1486–1502; these read PLGC…SFSQ, DGKC…GQAG, and SSAC…TITG. Residues 1510–1564 enclose the Thyroglobulin type-1 11 domain; the sequence is VTDCQRDEAGLQCDQNGQYQANQKDMDSGEVFCVDSEGQRLQWLQTEAGLSESQC. A Type IIIA repeat occupies 1602 to 1722; sequence CLADCADDEA…GTNLTDTHLF (121 aa). N1715 carries an N-linked (GlcNAc...) asparagine glycan. 4 disulfide bridges follow: C1723–C1748, C1727–C1733, C1732–C1834, and C1759–C1776. A Type IIIB repeat occupies 1723–1891; the sequence is CLLACDQDSC…LFSAEQANLW (169 aa). N-linked (GlcNAc...) asparagine glycans are attached at residues N1773 and N1866. Disulfide bonds link C1892/C1918, C1896/C1903, C1927/C1938, C1995/C2023, C1999/C2005, C2004/C2075, and C2034/C2047. The Type IIIA repeat unit spans residues 1892–1994; sequence CLSRCAQEPV…EKLISNGFFE (103 aa). N1937 carries N-linked (GlcNAc...) asparagine glycosylation. The stretch at 1995 to 2127 is one Type IIIB repeat; the sequence is CERLCDRDPC…SATRNFSLAQ (133 aa). N2012 carries N-linked (GlcNAc...) asparagine glycosylation. N-linked (GlcNAc...) asparagine glycosylation occurs at N2122. The Type IIIA repeat unit spans residues 2128–2185; the sequence is DFCLQECSRHQDCLVTTLQIQQGVVRCVFYPDIQSCEHSLRSKTCWLLLHEEAAYIYR. Intrachain disulfides connect C2130–C2154, C2134–C2140, and C2163–C2172. Position 2184 is an iodotyrosine (Y2184). Residues 2188–2768 are cholinesterase-like (ChEL); that stretch reads GAPLHQSDGI…LEPVPKSYSK (581 aa). N2251 is a glycosylation site (N-linked (GlcNAc...) asparagine). Cysteines 2265 and 2282 form a disulfide. Residues N2296 and N2445 are each glycosylated (N-linked (GlcNAc...) asparagine). C2443 and C2454 are oxidised to a cystine. The residue at position 2541 (Y2541) is a Thyroxine. Y2574 carries the post-translational modification Iodotyrosine; alternate. Residue Y2574 is modified to Thyroxine; alternate. At Y2574 the chain carries Triiodothyronine; alternate. The residue at position 2574 (Y2574) is a Diiodotyrosine; alternate. N2583 carries an N-linked (GlcNAc...) asparagine glycan. Iodotyrosine is present on residues Y2588 and Y2618. C2592 and C2716 are oxidised to a cystine. Residue Y2698 is modified to Diiodotyrosine. The interval 2731 to 2768 is disordered; it reads GAKDAQLTKSGEEDLEVGPGSEEDFSGSLEPVPKSYSK. Residues 2743-2755 are compositionally biased toward acidic residues; that stretch reads EDLEVGPGSEEDF. Y2766 is modified (iodotyrosine; alternate). A Thyroxine; alternate modification is found at Y2766. Triiodothyronine; alternate is present on Y2766. Position 2766 is a diiodotyrosine; alternate (Y2766).

The protein belongs to the type-B carboxylesterase/lipase family. Monomer. Homodimer (via ChEL region); occurs in the endoplasmic reticulum and is required for export to the Golgi apparatus. Homooligomer; disulfide-linked; stored in this form in the thyroid follicle lumen. Iodinated on tyrosine residues by TPO. There are 4 pairs of iodinated tyrosines used for coupling: acceptor Tyr-25 is coupled to donor Tyr-150 or Tyr-235, acceptor Tyr-2574 is coupled to donor Tyr-2541, acceptor Tyr-2766 in monomer 1 is coupled to donor Tyr-2766 in monomer 2 and acceptor Tyr-1310 in monomer 1 is coupled to donor Tyr-109 in monomer 2. In terms of processing, sulfated tyrosines are desulfated during iodination. Post-translationally, undergoes sequential proteolysis by cathepsins to release thyroxine (T4) and triiodothyronine (T3) hormones. In the thyroid follicle lumen, cross-linked TG (storage form) is solubilized by limited proteolysis mediated by cathepsins CTSB and/or CTSL. Partially cleaved TG is further processed by CTSK/cathepsin K and/or CTSL resulting in the release of thyroxine (T4). Following endocytosis, further processing occurs leading to the release of triiodothyronine (T3) and more T4 hormones. In terms of tissue distribution, specifically expressed in the thyroid gland.

Its subcellular location is the secreted. Acts as a substrate for the production of iodinated thyroid hormones thyroxine (T4) and triiodothyronine (T3). The synthesis of T3 and T4 involves iodination of selected tyrosine residues of TG/thyroglobulin followed by their oxidative coupling. Following TG re-internalization and lysosomal-mediated proteolysis, T3 and T4 are released from the polypeptide backbone leading to their secretion into the bloodstream. One dimer produces 7 thyroid hormone molecules. The polypeptide is Thyroglobulin (Tg) (Rattus norvegicus (Rat)).